We begin with the raw amino-acid sequence, 30 residues long: Snaclec carinactivase-1 regulatory subunit 17 kDa chain (30 aa).

The C-type lectin domain occupies 1 to 30 (DCLPGWSSHEGHCYKVFNQEMYWADAEKFC). Cys2 and Cys13 are oxidised to a cystine.

This sequence belongs to the snaclec family. As to quaternary structure, heterodimer of a metalloproteinase subunit and a regulatory subunit comprising two polypeptides disulfide-linked (14 kDa and 17 kDa chains). Expressed by the venom gland.

Its subcellular location is the secreted. Calcium-dependent prothrombin activator. This protein may activate prothrombin via recognition by the regulatory subunit of the calcium ion bound conformation of its gamma-carboxyglutamic acid (GLA) domain, and the subsequent conversion of prothrombin to active thrombin is catalyzed by the catalytic subunit. This Echis carinatus (Saw-scaled viper) protein is Snaclec carinactivase-1 regulatory subunit 17 kDa chain.